Consider the following 107-residue polypeptide: MPYIYLIISISTEVIGSAFLKSSEGFSKFIPSLGTIISFGICFYFLSKTMQHLPLNITYATWAGLGLVLTTVVSIIIFKEQINLITIVSIVLIIVGVVSLNIFGTSH.

The next 3 membrane-spanning stretches (helical) occupy residues 26–46, 57–77, and 84–104; these read FSKFIPSLGTIISFGICFYFL, ITYATWAGLGLVLTTVVSIII, and LITIVSIVLIIVGVVSLNIFG.

This sequence belongs to the drug/metabolite transporter (DMT) superfamily. Small multidrug resistance (SMR) (TC 2.A.7.1) family.

Its subcellular location is the cell membrane. In terms of biological role, multidrug exporter. Is implicated for the resistance to bacteriocidal quaternary ammonium compounds. The sequence is that of Quaternary ammonium compound-resistance protein QacC from Staphylococcus sp. (strain ST827).